A 291-amino-acid polypeptide reads, in one-letter code: Glucose and ribitol dehydrogenase (291 aa).

The segment at 1–35 (MASGGQFPPQKQESQPGKEHLMDPSPQHASPHYKP) is disordered. NAD(+) is bound at residue 45–69 (LVTGGDSGIGRSVCYHFALEGATVA). Ser-183 contributes to the substrate binding site. Residue Tyr-196 is the Proton acceptor of the active site.

Belongs to the short-chain dehydrogenases/reductases (SDR) family. Expressed in embryogenic cells, somatic embryos and seeds in the later stages of development, but not in non-embryogenic cells and mature leaves.

Its function is as follows. May act as a short alcohol-polyol-sugar dehydrogenase possibly related to carbohydrate metabolism and the acquisition of desiccation tolerance. May also be involved in signal transduction. This is Glucose and ribitol dehydrogenase (CAISE5) from Daucus carota (Wild carrot).